The following is a 297-amino-acid chain: ClpXP adapter protein SpxH (297 aa).

The protein belongs to the SpxH family. Interacts with Spx.

Its subcellular location is the cytoplasm. In terms of biological role, adapter protein required for efficient degradation of Spx by ClpXP under non-stress conditions. Interaction with Spx stabilizes Spx and exposes the C-terminus of Spx for recognition and proteolysis by ClpXP. The sequence is that of ClpXP adapter protein SpxH from Bacillus cereus (strain ATCC 10987 / NRS 248).